Consider the following 86-residue polypeptide: Cell division topological specificity factor (86 aa).

The protein belongs to the MinE family.

Functionally, prevents the cell division inhibition by proteins MinC and MinD at internal division sites while permitting inhibition at polar sites. This ensures cell division at the proper site by restricting the formation of a division septum at the midpoint of the long axis of the cell. This is Cell division topological specificity factor from Rhizobium rhizogenes (strain K84 / ATCC BAA-868) (Agrobacterium radiobacter).